A 499-amino-acid chain; its full sequence is Potassium voltage-gated channel subfamily A member 2 (499 aa).

Positions Met-1–Glu-26 are disordered. Residues Met-1–Met-125 are tetramerization domain. The Cytoplasmic segment spans residues Met-1 to Gly-160. Residues Pro-161–Leu-182 traverse the membrane as a helical segment. The Extracellular segment spans residues Glu-183 to Pro-221. N-linked (GlcNAc...) asparagine glycosylation is present at Asn-207. A helical membrane pass occupies residues Phe-222–Ala-243. Cys-244 carries S-palmitoyl cysteine lipidation. At Cys-244–Ile-254 the chain is on the cytoplasmic side. The helical transmembrane segment at Met-255–Ala-275 threads the bilayer. At Glu-276–Ser-289 the chain is on the extracellular side. The helical; Voltage-sensor transmembrane segment at Leu-290–His-310 threads the bilayer. The Cytoplasmic portion of the chain corresponds to Ser-311–Met-325. An S4-S5 linker region spans residues Lys-312 to Met-325. The helical transmembrane segment at Arg-326 to Tyr-347 threads the bilayer. The Extracellular segment spans residues Phe-348–Ile-361. The helical intramembrane region spans Pro-362–Thr-373. The Selectivity filter signature appears at Thr-374 to Asp-379. An intramembrane segment occupies Thr-374–Val-381. The Extracellular portion of the chain corresponds to Pro-382–Lys-388. A helical transmembrane segment spans residues Ile-389–Tyr-417. Topologically, residues His-418 to Val-499 are cytoplasmic. Tyr-429 is subject to Phosphotyrosine. 4 positions are modified to phosphoserine: Ser-434, Ser-440, Ser-441, and Ser-449. Position 458 is a phosphotyrosine (Tyr-458). A Phosphoserine modification is found at Ser-468. The PDZ-binding motif lies at Thr-497–Val-499.

This sequence belongs to the potassium channel family. A (Shaker) (TC 1.A.1.2) subfamily. Kv1.2/KCNA2 sub-subfamily. In terms of assembly, homotetramer and heterotetramer with other channel-forming alpha subunits, such as KCNA1, KCNA4, KCNA5, KCNA6 and KCNA7. Channel activity is regulated by interaction with beta subunits, including KCNAB1 and KCNAB2. Identified in a complex with KCNA1 and KCNAB2. Identified in a complex with KCNA5 and KCNAB1. Identified in a complex with KCNA4 and FYN. Interacts with PTK2B. Interacts (via C-terminus) with CTTN. Interacts with ADAM22. Interacts with CNTNAP2. Interacts (via C-terminus) with the PDZ domains of DLG1, DLG2 and DLG4. Interacts (via N-terminal cytoplasmic domain) with RHOA (GTP-bound form); this regulates channel activity by reducing location at the cell surface in response to CHRM1 activation. Interacts with DRD2. Interacts with SIGMAR1; cocaine consumption leads to increased interaction. Interacts with ADAM11. Interacts with LYNX1. Post-translationally, phosphorylated on tyrosine residues; phosphorylation increases in response to ischemia. Phosphorylated on tyrosine residues by activated PTK2B/PYK2. Phosphorylation on tyrosine residues suppresses ion channel activity. Phosphorylated on tyrosine residues in response to CHRM1 activation; this abolishes interaction with CTTN. This is probably due to endocytosis of the phosphorylated channel subunits. Phosphorylated on serine residues in response to increased cAMP levels; phosphorylation is apparently not catalyzed by PKA. In terms of processing, N-glycosylated, with complex, sialylated N-glycans. In terms of tissue distribution, detected in brain. Detected in cerebellum. Detected in mitral cells in the olfactory bulb. Detected in cochlea. Detected in cerebellum, particularly in the basket cell axon plexus and in the terminal regions around Purkinje cells (at protein level). Detected in juxtaparanodal regions in sciatic nerve. Detected in Schwann cells from sciatic nerve. Detected in dopamine neurons in substantia nigra. Detected in large myelinated fibers in juxtaparanodes in the CA3 and CA1 areas of the hippocampus. Detected in brain, in punctae on fiber tracts in brain stem and spinal cord, and on axons in the juxtaparanodal regions of the node of Ranvier (at protein level). Detected in dopamine neurons in the midbrain.

It is found in the cell membrane. It localises to the membrane. The protein localises to the cell projection. Its subcellular location is the axon. The protein resides in the synapse. It is found in the endoplasmic reticulum membrane. It localises to the lamellipodium membrane. The protein localises to the synaptosome. Its subcellular location is the presynaptic cell membrane. The protein resides in the dendrite. It is found in the perikaryon. It localises to the cell junction. The protein localises to the paranodal septate junction. It catalyses the reaction K(+)(in) = K(+)(out). Inhibited by 4-aminopyridine (4-AP), dendrotoxin (DTX) and charybdotoxin (CTX), but not by tetraethylammonium (TEA). Inhibited by tityustoxin-K alpha (TsTX-Kalpha), a toxin that is highly specific for KCNA2. Inhibited by maurotoxin. Inhibited by kappaM conotoxins kappaM-RIIIJ and kappaM-RIIIK. Functionally, voltage-gated potassium channel that mediates transmembrane potassium transport in excitable membranes, primarily in the brain and the central nervous system, but also in the cardiovascular system. Prevents aberrant action potential firing and regulates neuronal output. Forms tetrameric potassium-selective channels through which potassium ions pass in accordance with their electrochemical gradient. The channel alternates between opened and closed conformations in response to the voltage difference across the membrane. Can form functional homotetrameric channels and heterotetrameric channels that contain variable proportions of KCNA1, KCNA2, KCNA4, KCNA5, KCNA6, KCNA7, and possibly other family members as well; channel properties depend on the type of alpha subunits that are part of the channel. Channel properties are modulated by cytoplasmic beta subunits that regulate the subcellular location of the alpha subunits and promote rapid inactivation of delayed rectifier potassium channels. In vivo, membranes probably contain a mixture of heteromeric potassium channel complexes, making it difficult to assign currents observed in intact tissues to any particular potassium channel family member. Homotetrameric KCNA2 forms a delayed-rectifier potassium channel that opens in response to membrane depolarization, followed by slow spontaneous channel closure. In contrast, a heteromultimer formed by KCNA2 and KCNA4 shows rapid inactivation. Contributes to the regulation of action potentials in neurons. KCNA2-containing channels play a presynaptic role and prevent hyperexcitability and aberrant action potential firing. Response to toxins that are selective for KCNA1, respectively for KCNA2, suggests that heteromeric potassium channels composed of both KCNA1 and KCNA2 play a role in pacemaking and regulate the output of deep cerebellar nuclear neurons. Response to toxins that are selective for KCNA2-containing potassium channels suggests that in Purkinje cells, dendritic subthreshold KCNA2-containing potassium channels prevent random spontaneous calcium spikes, suppressing dendritic hyperexcitability without hindering the generation of somatic action potentials, and thereby play an important role in motor coordination. KCNA2-containing channels play a role in GABAergic transmission from basket cells to Purkinje cells in the cerebellum, and thereby play an import role in motor coordination. Plays a role in the induction of long-term potentiation of neuron excitability in the CA3 layer of the hippocampus. May function as down-stream effector for G protein-coupled receptors and inhibit GABAergic inputs to basolateral amygdala neurons. May contribute to the regulation of neurotransmitter release, such as gamma-aminobutyric acid (GABA). Contributes to the regulation of the axonal release of the neurotransmitter dopamine. Reduced KCNA2 expression plays a role in the perception of neuropathic pain after peripheral nerve injury, but not acute pain. Plays a role in the regulation of the time spent in non-rapid eye movement (NREM) sleep. In Mus musculus (Mouse), this protein is Potassium voltage-gated channel subfamily A member 2 (Kcna2).